The primary structure comprises 461 residues: Ubiquinone hydroxylase UbiM (461 aa).

The protein belongs to the UbiH/COQ6 family. It depends on FAD as a cofactor.

The enzyme catalyses a 2-(all-trans-polyprenyl)phenol + NADPH + O2 + H(+) = a 3-(all-trans-polyprenyl)benzene-1,2-diol + NADP(+) + H2O. It catalyses the reaction a 5-methoxy-2-methyl-3-(all-trans-polyprenyl)benzene-1,4-diol + AH2 + O2 = a 3-demethylubiquinol + A + H2O. It functions in the pathway cofactor biosynthesis; ubiquinone biosynthesis. Catalyzes the hydroxylation of three positions of the aromatic ring during ubiquinone biosynthesis. This is Ubiquinone hydroxylase UbiM from Neisseria meningitidis serogroup C / serotype 2a (strain ATCC 700532 / DSM 15464 / FAM18).